The following is an 89-amino-acid chain: Small ribosomal subunit protein uS15 (89 aa).

The protein belongs to the universal ribosomal protein uS15 family. As to quaternary structure, part of the 30S ribosomal subunit. Forms a bridge to the 50S subunit in the 70S ribosome, contacting the 23S rRNA.

Its function is as follows. One of the primary rRNA binding proteins, it binds directly to 16S rRNA where it helps nucleate assembly of the platform of the 30S subunit by binding and bridging several RNA helices of the 16S rRNA. Functionally, forms an intersubunit bridge (bridge B4) with the 23S rRNA of the 50S subunit in the ribosome. This chain is Small ribosomal subunit protein uS15, found in Renibacterium salmoninarum (strain ATCC 33209 / DSM 20767 / JCM 11484 / NBRC 15589 / NCIMB 2235).